A 554-amino-acid chain; its full sequence is 7-epi-sesquithujene synthase (554 aa).

Residues aspartate 308 and aspartate 312 each coordinate Mg(2+). Substrate-binding residues include aspartate 308, aspartate 312, arginine 449, and asparagine 452. The DDXXD motif signature appears at 308-312 (DDMFD). Positions 452, 456, and 460 each coordinate Mg(2+).

This sequence belongs to the terpene synthase family. In terms of assembly, monomer. It depends on Mg(2+) as a cofactor. Requires Mn(2+) as cofactor. As to expression, highly expressed in the husk. Detected in leaf sheaths and leaves.

Its subcellular location is the cytoplasm. The enzyme catalyses (2E,6E)-farnesyl diphosphate = 7-epi-sesquithujene + diphosphate. It carries out the reaction (2E,6E)-farnesyl diphosphate = (1S,5S,6R)-alpha-bergamotene + diphosphate. The catalysed reaction is (2E,6E)-farnesyl diphosphate = (E)-beta-farnesene + diphosphate. It catalyses the reaction (2E,6E)-farnesyl diphosphate = (S)-beta-bisabolene + diphosphate. The enzyme catalyses (2Z,6E)-farnesyl diphosphate = (-)-beta-curcumene + diphosphate. It carries out the reaction (2E,6E)-farnesyl diphosphate = gamma-curcumene + diphosphate. The catalysed reaction is (2E,6E)-farnesyl diphosphate = sesquisabinene A + diphosphate. It participates in secondary metabolite biosynthesis; terpenoid biosynthesis. In terms of biological role, sesquiterpene synthase involved in the production after herbivore attack of a blend of volatiles that attracts natural enemies of herbivores. Converts farnesyl diphosphate to (S)-beta-bisabolene and 7-epi-sesquithujene, along with a mixture of more than 20 other minor sesquiterpene olefins. Can also act in vitro as a monoterpene synthase, converting geranyl diphosphate to (S)-(-)-limonene, beta-myrcene and 11 other monoterpenes. The chain is 7-epi-sesquithujene synthase from Zea mays (Maize).